The primary structure comprises 246 residues: Small ribosomal subunit protein uS2 (246 aa).

This sequence belongs to the universal ribosomal protein uS2 family.

The polypeptide is Small ribosomal subunit protein uS2 (Helicobacter acinonychis (strain Sheeba)).